We begin with the raw amino-acid sequence, 349 residues long: Nicotinate-nucleotide--dimethylbenzimidazole phosphoribosyltransferase (349 aa).

Residue E318 is the Proton acceptor of the active site.

The protein belongs to the CobT family.

It carries out the reaction 5,6-dimethylbenzimidazole + nicotinate beta-D-ribonucleotide = alpha-ribazole 5'-phosphate + nicotinate + H(+). Its pathway is nucleoside biosynthesis; alpha-ribazole biosynthesis; alpha-ribazole from 5,6-dimethylbenzimidazole: step 1/2. Its function is as follows. Catalyzes the synthesis of alpha-ribazole-5'-phosphate from nicotinate mononucleotide (NAMN) and 5,6-dimethylbenzimidazole (DMB). The sequence is that of Nicotinate-nucleotide--dimethylbenzimidazole phosphoribosyltransferase from Alkaliphilus metalliredigens (strain QYMF).